Reading from the N-terminus, the 565-residue chain is NAD-dependent malic enzyme (565 aa).

Tyr104 acts as the Proton donor in catalysis. Arg157 provides a ligand contact to NAD(+). Catalysis depends on Lys175, which acts as the Proton acceptor. Residues Glu246, Asp247, and Asp270 each coordinate a divalent metal cation. Residues Asp270 and Asn418 each coordinate NAD(+).

It belongs to the malic enzymes family. In terms of assembly, homotetramer. The cofactor is Mg(2+). It depends on Mn(2+) as a cofactor.

It catalyses the reaction (S)-malate + NAD(+) = pyruvate + CO2 + NADH. It carries out the reaction oxaloacetate + H(+) = pyruvate + CO2. This chain is NAD-dependent malic enzyme, found in Yersinia pseudotuberculosis serotype O:1b (strain IP 31758).